The sequence spans 88 residues: UPF0237 protein SMU_72 (88 aa).

Residues 4 to 77 form the ACT domain; that stretch reads IITVVGKDRT…ETLNVKINIQ (74 aa).

It belongs to the UPF0237 family. In terms of assembly, homodimer.

The polypeptide is UPF0237 protein SMU_72 (Streptococcus mutans serotype c (strain ATCC 700610 / UA159)).